The chain runs to 59 residues: Temporin-CDYe (59 aa).

Positions methionine 1–cysteine 22 are cleaved as a signal peptide. Residues glutamate 23–glutamate 42 constitute a propeptide that is removed on maturation.

The protein belongs to the frog skin active peptide (FSAP) family. Temporin subfamily. Expressed by the skin glands.

Its subcellular location is the secreted. Antimicrobial peptide. This Rana dybowskii (Dybovsky's frog) protein is Temporin-CDYe.